Here is a 579-residue protein sequence, read N- to C-terminus: YTH domain-containing family protein 2 (579 aa).

Positions 1–45 (MSASSLLEQRPKGQGNKVQNGSVHQKDGLNDDDFEPYLSPQARPN) are disordered. N-acetylserine is present on serine 2. Phosphoserine occurs at positions 2, 4, 5, 22, 39, and 196. The interval 2–384 (SASSLLEQRP…QAGSGSTPSE (383 aa)) is localization to mRNA processing bodies (P-bodies). Residues 247–387 (AKQQPKLKTK…SGSTPSEPHP (141 aa)) are disordered. Positions 291-316 (ALVQNIGQPTQGSPQPVGQQANNSPP) are enriched in polar residues. A compositionally biased stretch (low complexity) spans 337–349 (AQLSVQQQAAQPT). Serine 359 is modified (phosphoserine). The span at 359 to 371 (SGFGHNGVDGNGV) shows a compositional bias: gly residues. A compositionally biased stretch (polar residues) spans 372–383 (GQSQAGSGSTPS). The interaction with m6A-containing mRNAs stretch occupies residues 385–579 (PHPVLEKLRS…VKKERQGRGK (195 aa)). Serine 394 carries the phosphoserine modification. In terms of domain architecture, YTH spans 410–544 (GRVFIIKSYS…EKAKQVLKII (135 aa)). Residues 416–418 (KSY), aspartate 422, 432–433 (WC), asparagine 462, tryptophan 486, and tryptophan 491 each bind RNA.

The protein belongs to the YTHDF family. YTHDF2 subfamily. Interacts with CNOT1; interaction is direct and promotes recruitment of the CCR4-NOT complex. Interacts with YTHDF3. Interacts with RIDA/HRSP12; interaction leads to recruitment of the ribonuclease P/MRP complex. Post-translationally, ubiquitinated by the SCF(SKP2) complex, leading to its degradation. Highly expressed in induced pluripotent stem cells (iPSCs) and down-regulated during neural differentiation.

It localises to the cytoplasm. Its subcellular location is the cytosol. The protein localises to the P-body. The protein resides in the stress granule. It is found in the nucleus. Specifically recognizes and binds N6-methyladenosine (m6A)-containing RNAs, and regulates their stability. M6A is a modification present at internal sites of mRNAs and some non-coding RNAs and plays a role in mRNA stability and processing. Acts as a regulator of mRNA stability by promoting degradation of m6A-containing mRNAs via interaction with the CCR4-NOT and ribonuclease P/MRP complexes, depending on the context. The YTHDF paralogs (YTHDF1, YTHDF2 and YTHDF3) share m6A-containing mRNAs targets and act redundantly to mediate mRNA degradation and cellular differentiation. M6A-containing mRNAs containing a binding site for RIDA/HRSP12 (5'-GGUUC-3') are preferentially degraded by endoribonucleolytic cleavage: cooperative binding of RIDA/HRSP12 and YTHDF2 to transcripts leads to recruitment of the ribonuclease P/MRP complex. Other m6A-containing mRNAs undergo deadenylation via direct interaction between YTHDF2 and CNOT1, leading to recruitment of the CCR4-NOT and subsequent deadenylation of m6A-containing mRNAs. Required maternally to regulate oocyte maturation: probably acts by binding to m6A-containing mRNAs, thereby regulating maternal transcript dosage during oocyte maturation, which is essential for the competence of oocytes to sustain early zygotic development. Also required during spermatogenesis: regulates spermagonial adhesion by promoting degradation of m6A-containing transcripts coding for matrix metallopeptidases. Also involved in hematopoietic stem cells specification by binding to m6A-containing mRNAs, leading to promote their degradation. Also acts as a regulator of neural development by promoting m6A-dependent degradation of neural development-related mRNA targets. Inhibits neural specification of induced pluripotent stem cells by binding to methylated neural-specific mRNAs and promoting their degradation, thereby restraining neural differentiation. Regulates circadian regulation of hepatic lipid metabolism: acts by promoting m6A-dependent degradation of PPARA transcripts. Regulates the innate immune response to infection by inhibiting the type I interferon response: acts by binding to m6A-containing IFNB transcripts and promoting their degradation. May also act as a promoter of cap-independent mRNA translation following heat shock stress: upon stress, relocalizes to the nucleus and specifically binds mRNAs with some m6A methylation mark at their 5'-UTR, protecting demethylation of mRNAs by FTO, thereby promoting cap-independent mRNA translation. Regulates mitotic entry by promoting the phase-specific m6A-dependent degradation of WEE1 transcripts. Promotes formation of phase-separated membraneless compartments, such as P-bodies or stress granules, by undergoing liquid-liquid phase separation upon binding to mRNAs containing multiple m6A-modified residues: polymethylated mRNAs act as a multivalent scaffold for the binding of YTHDF proteins, juxtaposing their disordered regions and thereby leading to phase separation. The resulting mRNA-YTHDF complexes then partition into different endogenous phase-separated membraneless compartments, such as P-bodies, stress granules or neuronal RNA granules. May also recognize and bind RNAs modified by C5-methylcytosine (m5C) and act as a regulator of rRNA processing. Its function is as follows. (Microbial infection) Promotes viral gene expression and replication of polyomavirus SV40: acts by binding to N6-methyladenosine (m6A)-containing viral RNAs. Functionally, (Microbial infection) Promotes viral gene expression and virion production of kaposis sarcoma-associated herpesvirus (KSHV) at some stage of the KSHV life cycle (in iSLK.219 and iSLK.BAC16 cells). Acts by binding to N6-methyladenosine (m6A)-containing viral RNAs. This chain is YTH domain-containing family protein 2, found in Homo sapiens (Human).